Reading from the N-terminus, the 1872-residue chain is Ral GTPase-activating protein subunit alpha-2 (1872 aa).

The segment at 350–370 (DGAGSTEQDKSHSNSSTLSDR) is disordered. Residues S373, S376, and S379 each carry the phosphoserine modification. The segment covering 445 to 469 (PDKKDVAQEDADKLGLSETDSKEAS) has biased composition (basic and acidic residues). The tract at residues 445–481 (PDKKDVAQEDADKLGLSETDSKEASSESSGHKRSSSW) is disordered. Position 486 is a phosphoserine (S486). Phosphoserine; by PKB is present on S696. Disordered regions lie at residues 711 to 730 (FRSATTSGAPGVEKARNTVR) and 758 to 813 (QQVP…GITM). T715 is subject to Phosphothreonine; by PKB. Polar residues-rich tracts occupy residues 758 to 768 (QQVPRSSSTSD) and 775 to 795 (SDSSQGQKVEHSQNLSSSEPK). Positions 796–810 (SVQESKGHVTHEHEG) are enriched in basic and acidic residues. S819 and S820 each carry phosphoserine. The segment at 831 to 851 (QQAHGRCRQRQTSESTGSDTV) is disordered. Over residues 840–849 (RQTSESTGSD) the composition is skewed to polar residues. S1592 bears the Phosphoserine mark. The Rap-GAP domain maps to 1634–1842 (LKNLDSRQCR…EERALYLEAI (209 aa)).

In terms of assembly, component of the heterodimeric RalGAP2 complex with RALGAPB. Heterodimerization is required for activity. As to expression, abundantly expressed in testis, pancreas, lung, thymus, brown fat, and white fat.

It localises to the cytoplasm. Its function is as follows. Catalytic subunit of the heterodimeric RalGAP2 complex which acts as a GTPase activator for the Ras-like small GTPases RALA and RALB. The chain is Ral GTPase-activating protein subunit alpha-2 (Ralgapa2) from Mus musculus (Mouse).